The sequence spans 396 residues: 1-deoxy-D-xylulose 5-phosphate reductoisomerase (396 aa).

5 residues coordinate NADPH: T13, G14, S15, I16, and N127. Position 128 (K128) interacts with 1-deoxy-D-xylulose 5-phosphate. E129 contacts NADPH. D153 contributes to the Mn(2+) binding site. Positions 154, 155, 184, and 207 each coordinate 1-deoxy-D-xylulose 5-phosphate. E155 is a Mn(2+) binding site. G213 contacts NADPH. 4 residues coordinate 1-deoxy-D-xylulose 5-phosphate: S220, N225, K226, and E229. Residue E229 participates in Mn(2+) binding.

This sequence belongs to the DXR family. Mg(2+) serves as cofactor. Mn(2+) is required as a cofactor.

It carries out the reaction 2-C-methyl-D-erythritol 4-phosphate + NADP(+) = 1-deoxy-D-xylulose 5-phosphate + NADPH + H(+). Its pathway is isoprenoid biosynthesis; isopentenyl diphosphate biosynthesis via DXP pathway; isopentenyl diphosphate from 1-deoxy-D-xylulose 5-phosphate: step 1/6. Its function is as follows. Catalyzes the NADPH-dependent rearrangement and reduction of 1-deoxy-D-xylulose-5-phosphate (DXP) to 2-C-methyl-D-erythritol 4-phosphate (MEP). This Pseudomonas putida (strain W619) protein is 1-deoxy-D-xylulose 5-phosphate reductoisomerase.